We begin with the raw amino-acid sequence, 183 residues long: Large ribosomal subunit protein bL27m (183 aa).

The transit peptide at 1-34 (MFLRPTSIPSAVSQIRAQLFAGPSSLASQIQVRW) directs the protein to the mitochondrion.

Belongs to the bacterial ribosomal protein bL27 family.

The protein localises to the mitochondrion. The protein is Large ribosomal subunit protein bL27m (RPL27) of Cryptococcus neoformans var. neoformans serotype D (strain B-3501A) (Filobasidiella neoformans).